Here is a 121-residue protein sequence, read N- to C-terminus: Large ribosomal subunit protein eL18 (121 aa).

This sequence belongs to the eukaryotic ribosomal protein eL18 family.

The sequence is that of Large ribosomal subunit protein eL18 from Methanoregula boonei (strain DSM 21154 / JCM 14090 / 6A8).